Here is a 364-residue protein sequence, read N- to C-terminus: Dual-specificity RNA methyltransferase RlmN (364 aa).

The Proton acceptor role is filled by Glu91. Residues 97 to 333 (EDDRGTLCIS…TTTRKTRGDD (237 aa)) form the Radical SAM core domain. A disulfide bridge connects residues Cys104 and Cys338. Residues Cys111, Cys115, and Cys118 each coordinate [4Fe-4S] cluster. S-adenosyl-L-methionine-binding positions include 164 to 165 (GE), Ser196, 218 to 220 (SLH), and Asn295. Catalysis depends on Cys338, which acts as the S-methylcysteine intermediate.

Belongs to the radical SAM superfamily. RlmN family. Requires [4Fe-4S] cluster as cofactor.

Its subcellular location is the cytoplasm. It catalyses the reaction adenosine(2503) in 23S rRNA + 2 reduced [2Fe-2S]-[ferredoxin] + 2 S-adenosyl-L-methionine = 2-methyladenosine(2503) in 23S rRNA + 5'-deoxyadenosine + L-methionine + 2 oxidized [2Fe-2S]-[ferredoxin] + S-adenosyl-L-homocysteine. It carries out the reaction adenosine(37) in tRNA + 2 reduced [2Fe-2S]-[ferredoxin] + 2 S-adenosyl-L-methionine = 2-methyladenosine(37) in tRNA + 5'-deoxyadenosine + L-methionine + 2 oxidized [2Fe-2S]-[ferredoxin] + S-adenosyl-L-homocysteine. Functionally, specifically methylates position 2 of adenine 2503 in 23S rRNA and position 2 of adenine 37 in tRNAs. m2A2503 modification seems to play a crucial role in the proofreading step occurring at the peptidyl transferase center and thus would serve to optimize ribosomal fidelity. This chain is Dual-specificity RNA methyltransferase RlmN, found in Dechloromonas aromatica (strain RCB).